A 108-amino-acid polypeptide reads, in one-letter code: Latartoxin-2c (108 aa).

Positions 1–19 (MKVLVITALCFILLQNVLG) are cleaved as a signal peptide. Residues 20–42 (EDTYEDLQNYIENLINENQDEAR) constitute a propeptide, removed in mature form. The short motif at 39–42 (DEAR) is the Processing quadruplet motif element. Cystine bridges form between C44–C61, C51–C72, C60–C84, and C74–C82. The residue at position 107 (I107) is an Isoleucine amide.

This sequence belongs to the neurotoxin 19 (CSTX) family. 11 (latartoxin) subfamily. Contains 4 disulfide bonds. In terms of processing, cleavage of the propeptide depends on the processing quadruplet motif (XXXR, with at least one of X being E). Expressed by the venom gland.

The protein resides in the secreted. Functionally, insect toxin. The sequence is that of Latartoxin-2c from Lachesana tarabaevi (Spider).